Consider the following 230-residue polypeptide: Claudin-2 (230 aa).

Residues 1–7 (MASLGLQ) lie on the Cytoplasmic side of the membrane. Residues 8–28 (LVGYILGLLGLLGTLVAMLLP) traverse the membrane as a helical segment. The Extracellular segment spans residues 29 to 81 (SWKTSSYVGASIVTAVGFSKGLWMECATHSTGITQCDIYSTLLGLPADIQAAQ). Cysteines 54 and 64 form a disulfide. The helical transmembrane segment at 82-102 (AMMVTSSAISSLACIISVVGM) threads the bilayer. The Cytoplasmic portion of the chain corresponds to 103-116 (RCTVFCQESRAKDR). Residues 117–137 (VAVAGGVFFILGGLLGFIPVA) form a helical membrane-spanning segment. The Extracellular portion of the chain corresponds to 138 to 162 (WNLHGILRDFYSPLVPDSMKFEIGE). A helical membrane pass occupies residues 163 to 183 (ALYLGIISSLFSLIAGIILCF). At 184 to 230 (SCSSQRNRSNYYDAYQAQPLATRSSPRPGQPPKVKSEFNSYSLTGYV) the chain is on the cytoplasmic side. The tract at residues 205–230 (TRSSPRPGQPPKVKSEFNSYSLTGYV) is disordered. A Glycyl lysine isopeptide (Lys-Gly) (interchain with G-Cter in SUMO) cross-link involves residue K218. Phosphoserine occurs at positions 219 and 223. Residues 220-230 (EFNSYSLTGYV) are compositionally biased toward polar residues. The interactions with TJP1, TJP2 and TJP3 stretch occupies residues 229 to 230 (YV).

This sequence belongs to the claudin family. In terms of assembly, can form homo- and heteropolymers with other claudins to mediate paracellular barrier and channel functions of tight junctions in response to physiological stimuli. Homopolymers interact with CLDN3, but not CLDN1, homopolymers. Directly interacts with TJP1/ZO-1, TJP2/ZO-2 and TJP3/ZO-3. The disulfide bond is necessary for pore formation, but is not required for correct protein trafficking.

Its subcellular location is the cell junction. It localises to the tight junction. It is found in the cell membrane. It catalyses the reaction Na(+)(in) = Na(+)(out). It carries out the reaction K(+)(in) = K(+)(out). The catalysed reaction is Rb(+)(in) = Rb(+)(out). The enzyme catalyses Li(+)(in) = Li(+)(out). It catalyses the reaction Cs(+)(in) = Cs(+)(out). It carries out the reaction Ca(2+)(in) = Ca(2+)(out). The catalysed reaction is methylamine(out) = methylamine(in). The enzyme catalyses choline(out) = choline(in). It catalyses the reaction H2O(in) = H2O(out). In terms of biological role, forms paracellular channels: polymerizes in tight junction strands with cation- and water-selective channels through the strands, conveying epithelial permeability in a process known as paracellular tight junction permeability. In intestinal epithelium, allows for sodium and water fluxes from the peritoneal side to the lumen of the intestine to regulate nutrient absorption and clear enteric pathogens as part of mucosal immune response. In kidney, allows passive sodium and calcium reabsorption across proximal tubules from the lumen back to the bloodstream. In the hepatobiliary tract, allows paracellular water and cation fluxes in the hepatic perivenous areas and biliary epithelium to generate bile flow and maintain osmotic gradients. The chain is Claudin-2 from Homo sapiens (Human).